We begin with the raw amino-acid sequence, 332 residues long: Methionine import ATP-binding protein MetN (332 aa).

Residues 2 to 239 (ITFQDVSKTY…PASDTARRFV (238 aa)) enclose the ABC transporter domain. 36 to 43 (GASGAGKS) contacts ATP.

Belongs to the ABC transporter superfamily. Methionine importer (TC 3.A.1.24) family. In terms of assembly, the complex is composed of two ATP-binding proteins (MetN), two transmembrane proteins (MetI) and a solute-binding protein (MetQ).

It is found in the cell inner membrane. The enzyme catalyses L-methionine(out) + ATP + H2O = L-methionine(in) + ADP + phosphate + H(+). The catalysed reaction is D-methionine(out) + ATP + H2O = D-methionine(in) + ADP + phosphate + H(+). In terms of biological role, part of the ABC transporter complex MetNIQ involved in methionine import. Responsible for energy coupling to the transport system. This Caulobacter vibrioides (strain ATCC 19089 / CIP 103742 / CB 15) (Caulobacter crescentus) protein is Methionine import ATP-binding protein MetN.